A 446-amino-acid polypeptide reads, in one-letter code: Tubulin beta-6 chain (446 aa).

Residues 1-4 carry the MREI motif motif; the sequence is MREI. Q11, E69, S138, G142, T143, and G144 together coordinate GTP. Mg(2+) is bound at residue E69. S172 bears the Phosphoserine; by CDK1 mark. Residues N204 and N226 each contribute to the GTP site. 5-glutamyl polyglutamate is present on E438.

It belongs to the tubulin family. As to quaternary structure, dimer of alpha and beta chains. A typical microtubule is a hollow water-filled tube with an outer diameter of 25 nm and an inner diameter of 15 nM. Alpha-beta heterodimers associate head-to-tail to form protofilaments running lengthwise along the microtubule wall with the beta-tubulin subunit facing the microtubule plus end conferring a structural polarity. Microtubules usually have 13 protofilaments but different protofilament numbers can be found in some organisms and specialized cells. Mg(2+) is required as a cofactor. Post-translationally, some glutamate residues at the C-terminus are polyglycylated, resulting in polyglycine chains on the gamma-carboxyl group. Glycylation is mainly limited to tubulin incorporated into axonemes (cilia and flagella) whereas glutamylation is prevalent in neuronal cells, centrioles, axonemes, and the mitotic spindle. Both modifications can coexist on the same protein on adjacent residues, and lowering polyglycylation levels increases polyglutamylation, and reciprocally. Cilia and flagella glycylation is required for their stability and maintenance. Flagella glycylation controls sperm motility. In terms of processing, some glutamate residues at the C-terminus are polyglutamylated, resulting in polyglutamate chains on the gamma-carboxyl group. Polyglutamylation plays a key role in microtubule severing by spastin (SPAST). SPAST preferentially recognizes and acts on microtubules decorated with short polyglutamate tails: severing activity by SPAST increases as the number of glutamates per tubulin rises from one to eight, but decreases beyond this glutamylation threshold. Glutamylation is also involved in cilia motility. Phosphorylated on Ser-172 by CDK1 during the cell cycle, from metaphase to telophase, but not in interphase. This phosphorylation inhibits tubulin incorporation into microtubules.

It localises to the cytoplasm. It is found in the cytoskeleton. Functionally, tubulin is the major constituent of microtubules, a cylinder consisting of laterally associated linear protofilaments composed of alpha- and beta-tubulin heterodimers. Microtubules grow by the addition of GTP-tubulin dimers to the microtubule end, where a stabilizing cap forms. Below the cap, tubulin dimers are in GDP-bound state, owing to GTPase activity of alpha-tubulin. In Bos taurus (Bovine), this protein is Tubulin beta-6 chain (TUBB6).